Reading from the N-terminus, the 151-residue chain is Large ribosomal subunit protein bL9 (151 aa).

This sequence belongs to the bacterial ribosomal protein bL9 family.

Its function is as follows. Binds to the 23S rRNA. The protein is Large ribosomal subunit protein bL9 of Chlorobium phaeovibrioides (strain DSM 265 / 1930) (Prosthecochloris vibrioformis (strain DSM 265)).